A 716-amino-acid polypeptide reads, in one-letter code: 1,4-alpha-glucan branching enzyme GlgB (716 aa).

The Nucleophile role is filled by Asp-398. The active-site Proton donor is the Glu-451.

The protein belongs to the glycosyl hydrolase 13 family. GlgB subfamily. In terms of assembly, monomer.

It carries out the reaction Transfers a segment of a (1-&gt;4)-alpha-D-glucan chain to a primary hydroxy group in a similar glucan chain.. Its pathway is glycan biosynthesis; glycogen biosynthesis. Catalyzes the formation of the alpha-1,6-glucosidic linkages in glycogen by scission of a 1,4-alpha-linked oligosaccharide from growing alpha-1,4-glucan chains and the subsequent attachment of the oligosaccharide to the alpha-1,6 position. The protein is 1,4-alpha-glucan branching enzyme GlgB of Nitrobacter hamburgensis (strain DSM 10229 / NCIMB 13809 / X14).